Reading from the N-terminus, the 199-residue chain is Fe/S biogenesis protein NfuA (199 aa).

Residues cysteine 151 and cysteine 154 each coordinate [4Fe-4S] cluster.

This sequence belongs to the NfuA family. Homodimer. [4Fe-4S] cluster serves as cofactor.

In terms of biological role, involved in iron-sulfur cluster biogenesis. Binds a 4Fe-4S cluster, can transfer this cluster to apoproteins, and thereby intervenes in the maturation of Fe/S proteins. Could also act as a scaffold/chaperone for damaged Fe/S proteins. This is Fe/S biogenesis protein NfuA from Stenotrophomonas maltophilia (strain R551-3).